A 201-amino-acid chain; its full sequence is Recombination protein RecR (201 aa).

A C4-type zinc finger spans residues 57-72; sequence CTHCRTFTEEESCAIC. The Toprim domain occupies 81–176; sequence GFLCVVEQPS…KVSRIAHGIP (96 aa).

This sequence belongs to the RecR family.

Its function is as follows. May play a role in DNA repair. It seems to be involved in an RecBC-independent recombinational process of DNA repair. It may act with RecF and RecO. This Histophilus somni (strain 129Pt) (Haemophilus somnus) protein is Recombination protein RecR.